Here is a 385-residue protein sequence, read N- to C-terminus: tRNA-specific 2-thiouridylase MnmA (385 aa).

Residues glycine 29–serine 36 and leucine 55 contribute to the ATP site. Cysteine 116 acts as the Nucleophile in catalysis. A disulfide bridge links cysteine 116 with cysteine 225. Glycine 141 contributes to the ATP binding site. Residues lysine 175–glutamine 177 form an interaction with tRNA region. Catalysis depends on cysteine 225, which acts as the Cysteine persulfide intermediate. The tract at residues arginine 330–tyrosine 331 is interaction with tRNA.

This sequence belongs to the MnmA/TRMU family.

The protein localises to the cytoplasm. The catalysed reaction is S-sulfanyl-L-cysteinyl-[protein] + uridine(34) in tRNA + AH2 + ATP = 2-thiouridine(34) in tRNA + L-cysteinyl-[protein] + A + AMP + diphosphate + H(+). Functionally, catalyzes the 2-thiolation of uridine at the wobble position (U34) of tRNA, leading to the formation of s(2)U34. The sequence is that of tRNA-specific 2-thiouridylase MnmA from Prochlorococcus marinus (strain AS9601).